We begin with the raw amino-acid sequence, 217 residues long: Small ribosomal subunit protein uS3c (217 aa).

Residues 43–117 (IKNYVQKNRK…KLNIAITRIA (75 aa)) enclose the KH type-2 domain.

It belongs to the universal ribosomal protein uS3 family. Part of the 30S ribosomal subunit.

The protein resides in the plastid. The protein localises to the chloroplast. In Ranunculus macranthus (Large buttercup), this protein is Small ribosomal subunit protein uS3c (rps3).